The primary structure comprises 684 residues: Pheromone-processing carboxypeptidase KEX1 (684 aa).

An N-terminal signal peptide occupies residues 1–18; sequence MVIKYLLLILVQSFVAFA. Residues 19 to 556 lie on the Lumenal side of the membrane; it reads LPFTSRSDPK…NQQTSNRITR (538 aa). N-linked (GlcNAc...) asparagine glycosylation occurs at N62. Active-site residues include S181 and D388. Residues N424 and N435 are each glycosylated (N-linked (GlcNAc...) asparagine). H446 is an active-site residue. N474 carries N-linked (GlcNAc...) asparagine glycosylation. Residues 494 to 549 are disordered; the sequence is KQKEESESKTSPTSVTQSKTSSISAVSGKSLATSTTLDQEHSATPSAEAERAKNQQ. The span at 510–538 shows a compositional bias: polar residues; it reads QSKTSSISAVSGKSLATSTTLDQEHSATP. A helical transmembrane segment spans residues 557-577; it reads LIQLLVIVVLIWGVYILYSSY. Over 578–684 the chain is Cytoplasmic; the sequence is RSRPSSIIKT…NQTNKQSVSK (107 aa). The segment at 647–684 is disordered; it reads MNEGITEHTDNRVDDFIIESDEEDAHDENQTNKQSVSK. A compositionally biased stretch (basic and acidic residues) spans 651-661; that stretch reads ITEHTDNRVDD. A compositionally biased stretch (acidic residues) spans 662–672; sequence FIIESDEEDAH.

It belongs to the peptidase S10 family.

It localises to the golgi apparatus. The protein localises to the trans-Golgi network membrane. The catalysed reaction is Preferential release of a C-terminal arginine or lysine residue.. Its function is as follows. Protease with a carboxypeptidase B-like function involved in the C-terminal processing of the lysine and arginine residues from protein precursors. Promotes cell fusion and is involved in the programmed cell death. The protein is Pheromone-processing carboxypeptidase KEX1 (KEX1) of Debaryomyces hansenii (strain ATCC 36239 / CBS 767 / BCRC 21394 / JCM 1990 / NBRC 0083 / IGC 2968) (Yeast).